The primary structure comprises 356 residues: Protein RecA (356 aa).

An ATP-binding site is contributed by 79–86 (GPESSGKT).

Belongs to the RecA family.

It is found in the cytoplasm. Functionally, can catalyze the hydrolysis of ATP in the presence of single-stranded DNA, the ATP-dependent uptake of single-stranded DNA by duplex DNA, and the ATP-dependent hybridization of homologous single-stranded DNAs. It interacts with LexA causing its activation and leading to its autocatalytic cleavage. This is Protein RecA from Borrelia hermsii (strain HS1 / DAH).